Consider the following 107-residue polypeptide: Small ribosomal subunit protein uS10 (107 aa).

It belongs to the universal ribosomal protein uS10 family. In terms of assembly, part of the 30S ribosomal subunit.

In terms of biological role, involved in the binding of tRNA to the ribosomes. This Deinococcus deserti (strain DSM 17065 / CIP 109153 / LMG 22923 / VCD115) protein is Small ribosomal subunit protein uS10.